The chain runs to 299 residues: Probable lipid kinase YegS (299 aa).

Residues 2 to 133 form the DAGKc domain; it reads AEFPASLLIL…IDMAQVNKQT (132 aa). Residues Thr40, 66 to 72, and Thr95 each bind ATP; that span reads GDGTINE. Leu215, Asp218, and Leu220 together coordinate Mg(2+). The active-site Proton acceptor is the Glu271.

This sequence belongs to the diacylglycerol/lipid kinase family. YegS lipid kinase subfamily. It depends on Mg(2+) as a cofactor. Requires Ca(2+) as cofactor.

It is found in the cytoplasm. Functionally, probably phosphorylates lipids; the in vivo substrate is unknown. The chain is Probable lipid kinase YegS from Shigella dysenteriae serotype 1 (strain Sd197).